A 438-amino-acid polypeptide reads, in one-letter code: ATP synthase subunit alpha, chloroplastic (438 aa).

Position 170–177 (170–177 (GDRQTGKT)) interacts with ATP.

The protein belongs to the ATPase alpha/beta chains family. In terms of assembly, F-type ATPases have 2 components, CF(1) - the catalytic core - and CF(0) - the membrane proton channel. CF(1) has five subunits: alpha(3), beta(3), gamma(1), delta(1), epsilon(1). CF(0) has four main subunits: a, b, b' and c.

The protein localises to the plastid. It is found in the chloroplast thylakoid membrane. It carries out the reaction ATP + H2O + 4 H(+)(in) = ADP + phosphate + 5 H(+)(out). Functionally, produces ATP from ADP in the presence of a proton gradient across the membrane. The alpha chain is a regulatory subunit. The sequence is that of ATP synthase subunit alpha, chloroplastic from Ochrosphaera neapolitana.